Reading from the N-terminus, the 224-residue chain is Transposase for insertion sequence-like element IS431mec (224 aa).

Residues 33-52 (EILRERGVNVHHSTVYRWVQ) constitute a DNA-binding region (H-T-H motif). One can recognise an Integrase catalytic domain in the interval 73 to 222 (WRIDETYIKI…SPCHEISIML (150 aa)).

Functionally, involved in the transposition of the insertion sequence. This is Transposase for insertion sequence-like element IS431mec (tnp) from Staphylococcus aureus (strain NCTC 8325 / PS 47).